Consider the following 387-residue polypeptide: Formate-dependent phosphoribosylglycinamide formyltransferase (387 aa).

N(1)-(5-phospho-beta-D-ribosyl)glycinamide contacts are provided by residues 12-13 and Glu-72; that span reads EL. ATP contacts are provided by residues Arg-104, Lys-145, 150-155, 185-188, and Glu-193; these read SSGKGQ and EEFI. Residues 109–300 form the ATP-grasp domain; that stretch reads DLAAKDLKLL…EFELHIRAIL (192 aa). Mg(2+)-binding residues include Glu-258 and Glu-270. N(1)-(5-phospho-beta-D-ribosyl)glycinamide contacts are provided by residues Asp-277, Lys-348, and 355 to 356; that span reads RR.

Belongs to the PurK/PurT family. Homodimer.

It catalyses the reaction N(1)-(5-phospho-beta-D-ribosyl)glycinamide + formate + ATP = N(2)-formyl-N(1)-(5-phospho-beta-D-ribosyl)glycinamide + ADP + phosphate + H(+). It participates in purine metabolism; IMP biosynthesis via de novo pathway; N(2)-formyl-N(1)-(5-phospho-D-ribosyl)glycinamide from N(1)-(5-phospho-D-ribosyl)glycinamide (formate route): step 1/1. Functionally, involved in the de novo purine biosynthesis. Catalyzes the transfer of formate to 5-phospho-ribosyl-glycinamide (GAR), producing 5-phospho-ribosyl-N-formylglycinamide (FGAR). Formate is provided by PurU via hydrolysis of 10-formyl-tetrahydrofolate. The protein is Formate-dependent phosphoribosylglycinamide formyltransferase of Leptospira borgpetersenii serovar Hardjo-bovis (strain JB197).